Consider the following 291-residue polypeptide: Kynurenine formamidase (291 aa).

Positions 33–37 match the HGGXW motif; that stretch reads HGGAW. The Nucleophile role is filled by S107. Active-site residues include D242 and H280.

The protein belongs to the kynurenine formamidase family. Homodimer.

The catalysed reaction is N-formyl-L-kynurenine + H2O = L-kynurenine + formate + H(+). The protein operates within amino-acid degradation; L-tryptophan degradation via kynurenine pathway; L-kynurenine from L-tryptophan: step 2/2. Functionally, catalyzes the hydrolysis of N-formyl-L-kynurenine to L-kynurenine, the second step in the kynurenine pathway of tryptophan degradation. Kynurenine may be further oxidized to nicotinic acid, NAD(H) and NADP(H). Required for elimination of toxic metabolites. This chain is Kynurenine formamidase, found in Debaryomyces hansenii (strain ATCC 36239 / CBS 767 / BCRC 21394 / JCM 1990 / NBRC 0083 / IGC 2968) (Yeast).